Here is a 174-residue protein sequence, read N- to C-terminus: Crossover junction endodeoxyribonuclease RuvC (174 aa).

Active-site residues include Asp-8, Glu-67, and Asp-139. The Mg(2+) site is built by Asp-8, Glu-67, and Asp-139.

The protein belongs to the RuvC family. In terms of assembly, homodimer which binds Holliday junction (HJ) DNA. The HJ becomes 2-fold symmetrical on binding to RuvC with unstacked arms; it has a different conformation from HJ DNA in complex with RuvA. In the full resolvosome a probable DNA-RuvA(4)-RuvB(12)-RuvC(2) complex forms which resolves the HJ. It depends on Mg(2+) as a cofactor.

The protein resides in the cytoplasm. The catalysed reaction is Endonucleolytic cleavage at a junction such as a reciprocal single-stranded crossover between two homologous DNA duplexes (Holliday junction).. Its function is as follows. The RuvA-RuvB-RuvC complex processes Holliday junction (HJ) DNA during genetic recombination and DNA repair. Endonuclease that resolves HJ intermediates. Cleaves cruciform DNA by making single-stranded nicks across the HJ at symmetrical positions within the homologous arms, yielding a 5'-phosphate and a 3'-hydroxyl group; requires a central core of homology in the junction. The consensus cleavage sequence is 5'-(A/T)TT(C/G)-3'. Cleavage occurs on the 3'-side of the TT dinucleotide at the point of strand exchange. HJ branch migration catalyzed by RuvA-RuvB allows RuvC to scan DNA until it finds its consensus sequence, where it cleaves and resolves the cruciform DNA. This chain is Crossover junction endodeoxyribonuclease RuvC, found in Ectopseudomonas mendocina (strain ymp) (Pseudomonas mendocina).